We begin with the raw amino-acid sequence, 139 residues long: Small ribosomal subunit protein eS6 (139 aa).

Belongs to the eukaryotic ribosomal protein eS6 family.

This Methanosarcina barkeri (strain Fusaro / DSM 804) protein is Small ribosomal subunit protein eS6.